A 101-amino-acid polypeptide reads, in one-letter code: Urease subunit beta (101 aa).

This sequence belongs to the urease beta subunit family. Heterotrimer of UreA (gamma), UreB (beta) and UreC (alpha) subunits. Three heterotrimers associate to form the active enzyme.

The protein resides in the cytoplasm. It catalyses the reaction urea + 2 H2O + H(+) = hydrogencarbonate + 2 NH4(+). It participates in nitrogen metabolism; urea degradation; CO(2) and NH(3) from urea (urease route): step 1/1. This chain is Urease subunit beta, found in Granulibacter bethesdensis (strain ATCC BAA-1260 / CGDNIH1).